The following is a 61-amino-acid chain: Beta-insect depressant toxin BaIT2 (61 aa).

An LCN-type CS-alpha/beta domain is found at 1 to 61; it reads DGYIRRRDGC…TWKSETNTCG (61 aa). 4 disulfides stabilise this stretch: Cys-10–Cys-60, Cys-14–Cys-35, Cys-21–Cys-42, and Cys-25–Cys-44.

This sequence belongs to the long (4 C-C) scorpion toxin superfamily. Sodium channel inhibitor family. Beta subfamily. In terms of tissue distribution, expressed by the venom gland.

The protein resides in the secreted. Depressant insect beta-toxins cause a transient contraction paralysis followed by a slow flaccid paralysis. They bind voltage-independently at site-4 of sodium channels (Nav) and shift the voltage of activation toward more negative potentials thereby affecting sodium channel activation and promoting spontaneous and repetitive firing. This toxin is active only on insects. The protein is Beta-insect depressant toxin BaIT2 of Buthacus arenicola (North African scorpion).